The chain runs to 163 residues: Protein-export protein SecB (163 aa).

This sequence belongs to the SecB family. Homotetramer, a dimer of dimers. One homotetramer interacts with 1 SecA dimer.

The protein localises to the cytoplasm. One of the proteins required for the normal export of preproteins out of the cell cytoplasm. It is a molecular chaperone that binds to a subset of precursor proteins, maintaining them in a translocation-competent state. It also specifically binds to its receptor SecA. The chain is Protein-export protein SecB from Caulobacter vibrioides (strain ATCC 19089 / CIP 103742 / CB 15) (Caulobacter crescentus).